A 95-amino-acid chain; its full sequence is Small ribosomal subunit protein bS18 (95 aa).

It belongs to the bacterial ribosomal protein bS18 family. As to quaternary structure, part of the 30S ribosomal subunit. Forms a tight heterodimer with protein bS6.

Its function is as follows. Binds as a heterodimer with protein bS6 to the central domain of the 16S rRNA, where it helps stabilize the platform of the 30S subunit. This chain is Small ribosomal subunit protein bS18, found in Acidiphilium cryptum (strain JF-5).